A 525-amino-acid polypeptide reads, in one-letter code: MDVDLLPLRKRITNTFKLCGFLIRSENSSYLAEQLLPFDAAERDKWLTVITENLQSQKLLTPHVERAALEKAINELNRVGLDEGETVFALIDAFTVPRFRYNQRIKKFELDTQPRQLLTAPRMKSDYMQQRYAMLLQKTLRHDLFAPAVIQDGVGAEAQAKKFKLQFAENLLATSAMKEAVVLGLLTQLKEGKFYVEDPTGCVQLDLTGARFHAGFFCEGCFVLAEGNYNNGVLKVDGLGFPPAEPANSSRAFFGTANTWGGESAKLLKYSAGLQELERTNTETTIVFLSDVRLDLPVVMEKLRQLFVGYDSCPPQAIVLMGPFTASTRNHHELRHHLDALGGLAAGCEQLKKQTDLILVPSSEDPTAPNILPRAPIPECLAAGLLKAWPRTQLATNPCRLQYCTQQIVVCRLDLMAKFCRNTLHFPEDTSQIEQHFARTIVCQGHLVPIHPIAMPVHWDYDPALWLYPLPDLIVMGDSCQSFSSSQHGCTVLNTGSFVKSKFAFKVYIPATRTIEDSEIPDELE.

It belongs to the DNA polymerase epsilon subunit B family. Component of the epsilon DNA polymerase complex consisting of four subunits: the catalytic subunit PolE1/DNApol-epsilon255 and the accessory subunits PolE2/DNApol-epsilon58, Chrac-14/DNApolE3 and PolE4.

It is found in the nucleus. Accessory component of the DNA polymerase epsilon complex. Participates in DNA repair and in chromosomal DNA replication. Has a role in the entrance and progression through S phase. Has a role in endoreplication. Essential for viability and tissue development. The chain is DNA polymerase epsilon subunit 2 from Drosophila melanogaster (Fruit fly).